We begin with the raw amino-acid sequence, 444 residues long: Phosphoglucosamine mutase (444 aa).

Ser103 (phosphoserine intermediate) is an active-site residue. 4 residues coordinate Mg(2+): Ser103, Asp241, Asp243, and Asp245. Residue Ser103 is modified to Phosphoserine.

The protein belongs to the phosphohexose mutase family. It depends on Mg(2+) as a cofactor. In terms of processing, activated by phosphorylation.

It catalyses the reaction alpha-D-glucosamine 1-phosphate = D-glucosamine 6-phosphate. In terms of biological role, catalyzes the conversion of glucosamine-6-phosphate to glucosamine-1-phosphate. This is Phosphoglucosamine mutase from Deinococcus radiodurans (strain ATCC 13939 / DSM 20539 / JCM 16871 / CCUG 27074 / LMG 4051 / NBRC 15346 / NCIMB 9279 / VKM B-1422 / R1).